Consider the following 207-residue polypeptide: Octanoyltransferase (207 aa).

The 176-residue stretch at 29 to 204 folds into the BPL/LPL catalytic domain; sequence AETRDELWVV…HLERHLSTSK (176 aa). Substrate contacts are provided by residues 68-75, 135-137, and 148-150; these read RGGQITYH, SLG, and GLS. Cysteine 166 functions as the Acyl-thioester intermediate in the catalytic mechanism.

The protein belongs to the LipB family.

It localises to the cytoplasm. The enzyme catalyses octanoyl-[ACP] + L-lysyl-[protein] = N(6)-octanoyl-L-lysyl-[protein] + holo-[ACP] + H(+). Its pathway is protein modification; protein lipoylation via endogenous pathway; protein N(6)-(lipoyl)lysine from octanoyl-[acyl-carrier-protein]: step 1/2. Catalyzes the transfer of endogenously produced octanoic acid from octanoyl-acyl-carrier-protein onto the lipoyl domains of lipoate-dependent enzymes. Lipoyl-ACP can also act as a substrate although octanoyl-ACP is likely to be the physiological substrate. In Chromobacterium violaceum (strain ATCC 12472 / DSM 30191 / JCM 1249 / CCUG 213 / NBRC 12614 / NCIMB 9131 / NCTC 9757 / MK), this protein is Octanoyltransferase.